Consider the following 146-residue polypeptide: 3-hydroxyacyl-[acyl-carrier-protein] dehydratase FabZ (146 aa).

Residue His48 is part of the active site.

This sequence belongs to the thioester dehydratase family. FabZ subfamily.

It is found in the cytoplasm. The enzyme catalyses a (3R)-hydroxyacyl-[ACP] = a (2E)-enoyl-[ACP] + H2O. Involved in unsaturated fatty acids biosynthesis. Catalyzes the dehydration of short chain beta-hydroxyacyl-ACPs and long chain saturated and unsaturated beta-hydroxyacyl-ACPs. This chain is 3-hydroxyacyl-[acyl-carrier-protein] dehydratase FabZ, found in Acetivibrio thermocellus (strain ATCC 27405 / DSM 1237 / JCM 9322 / NBRC 103400 / NCIMB 10682 / NRRL B-4536 / VPI 7372) (Clostridium thermocellum).